The following is a 256-amino-acid chain: 5-keto-4-deoxy-D-glucarate aldolase (256 aa).

The active-site Proton acceptor is H50. Q151 is a binding site for substrate. E153 contacts Mg(2+). Residues S178 and D179 each coordinate substrate. A Mg(2+)-binding site is contributed by D179.

The protein belongs to the HpcH/HpaI aldolase family. KDGluc aldolase subfamily. In terms of assembly, homohexamer; trimer of dimers. Mg(2+) is required as a cofactor.

It carries out the reaction 5-dehydro-4-deoxy-D-glucarate = 2-hydroxy-3-oxopropanoate + pyruvate. The enzyme catalyses 2-dehydro-3-deoxy-D-glucarate = 2-hydroxy-3-oxopropanoate + pyruvate. The protein operates within carbohydrate acid metabolism; galactarate degradation; D-glycerate from galactarate: step 2/3. Functionally, catalyzes the reversible retro-aldol cleavage of both 5-keto-4-deoxy-D-glucarate and 2-keto-3-deoxy-D-glucarate to pyruvate and tartronic semialdehyde. This Salmonella gallinarum (strain 287/91 / NCTC 13346) protein is 5-keto-4-deoxy-D-glucarate aldolase.